We begin with the raw amino-acid sequence, 398 residues long: Substance-K receptor (398 aa).

Residues 1 to 32 (MGTCDIVTEANISSGPESNTTGITAFSMPSWQ) lie on the Extracellular side of the membrane. 2 N-linked (GlcNAc...) asparagine glycosylation sites follow: asparagine 11 and asparagine 19. The chain crosses the membrane as a helical span at residues 33–56 (LALWATAYLALVLVAVTGNAIVIW). Over 57-69 (IILAHRRMRTVTN) the chain is Cytoplasmic. The helical transmembrane segment at 70–90 (YFIVNLALADLCMAAFNAAFN) threads the bilayer. The Extracellular segment spans residues 91 to 107 (FVYASHNIWYFGRAFCY). Cysteine 106 and cysteine 181 form a disulfide bridge. Residues 108-129 (FQNLFPITAMFVSIYSMTAIAA) traverse the membrane as a helical segment. The Cytoplasmic portion of the chain corresponds to 130-149 (DRYMAIVHPFQPRLSAPSTK). A helical membrane pass occupies residues 150-170 (AVIAGIWLVALALASPQCFYS). Residues 171 to 196 (TVTMDQGATKCVVAWPEDSGGKTLLL) lie on the Extracellular side of the membrane. The chain crosses the membrane as a helical span at residues 197–218 (YHLVVIALIYFLPLAVMFVAYS). Residues 219-251 (VIGLTLWRRAVPGHQAHGANLRHLQAMKKFVKT) lie on the Cytoplasmic side of the membrane. A helical transmembrane segment spans residues 252–272 (MVLVVLTFAICWLPYHLYFIL). The Extracellular portion of the chain corresponds to 273–290 (GSFQEDIYCHKFIQQVYL). Residues 291-310 (ALFWLAMSSTMYNPIIYCCL) form a helical membrane-spanning segment. Residues 311-398 (NHRFRSGFRL…LAPTKTHVEI (88 aa)) are Cytoplasmic-facing. Residue cysteine 324 is the site of S-palmitoyl cysteine attachment.

Belongs to the G-protein coupled receptor 1 family.

It localises to the cell membrane. Its function is as follows. This is a receptor for the tachykinin neuropeptide substance K (neurokinin A). It is associated with G proteins that activate a phosphatidylinositol-calcium second messenger system. The rank order of affinity of this receptor to tachykinins is: substance K &gt; neuromedin-K &gt; substance P. The protein is Substance-K receptor (TACR2) of Homo sapiens (Human).